The primary structure comprises 145 residues: Dihydrolipoyllysine-residue succinyltransferase component of 2-oxoglutarate dehydrogenase complex, mitochondrial (145 aa).

The Lipoyl-binding domain occupies 4–31; it reads ITVQTPAFAESVTEGDVRVEGGTPLFTL. Ser14 is modified (phosphoserine). An N6-acetyllysine mark is found at Lys36 and Lys66. Catalysis depends on residues His119 and Asp123.

This sequence belongs to the 2-oxoacid dehydrogenase family. As to quaternary structure, the 2-oxoglutarate dehydrogenase complex is composed of OGDH (2-oxoglutarate dehydrogenase; E1), DLST (dihydrolipoamide succinyltransferase; E2), DLD (dihydrolipoamide dehydrogenase; E3) and the assembly factor KGD4. It contains multiple copies of the three enzymatic components (E1, E2 and E3). In the nucleus, the 2-oxoglutarate dehydrogenase complex associates with KAT2A. Interacts with ABHD11; this interaction maintains the functional lipoylation of the 2-oxoglutarate dehydrogenase complex. (R)-lipoate serves as cofactor.

It is found in the mitochondrion matrix. The protein localises to the nucleus. The catalysed reaction is N(6)-[(R)-dihydrolipoyl]-L-lysyl-[protein] + succinyl-CoA = N(6)-[(R)-S(8)-succinyldihydrolipoyl]-L-lysyl-[protein] + CoA. It functions in the pathway amino-acid degradation; L-lysine degradation via saccharopine pathway; glutaryl-CoA from L-lysine: step 6/6. The protein operates within carbohydrate metabolism; tricarboxylic acid cycle. Its function is as follows. Dihydrolipoamide succinyltransferase (E2) component of the 2-oxoglutarate dehydrogenase complex. The 2-oxoglutarate dehydrogenase complex catalyzes the overall conversion of 2-oxoglutarate to succinyl-CoA and CO(2). The 2-oxoglutarate dehydrogenase complex is mainly active in the mitochondrion. A fraction of the 2-oxoglutarate dehydrogenase complex also localizes in the nucleus and is required for lysine succinylation of histones: associates with KAT2A on chromatin and provides succinyl-CoA to histone succinyltransferase KAT2A. The protein is Dihydrolipoyllysine-residue succinyltransferase component of 2-oxoglutarate dehydrogenase complex, mitochondrial of Mesocricetus auratus (Golden hamster).